A 311-amino-acid polypeptide reads, in one-letter code: tRNA dimethylallyltransferase (311 aa).

10-17 (GPTAVGKT) provides a ligand contact to ATP. 12–17 (TAVGKT) serves as a coordination point for substrate. Residues 35–38 (DSMQ) are interaction with substrate tRNA.

It belongs to the IPP transferase family. In terms of assembly, monomer. Requires Mg(2+) as cofactor.

The enzyme catalyses adenosine(37) in tRNA + dimethylallyl diphosphate = N(6)-dimethylallyladenosine(37) in tRNA + diphosphate. In terms of biological role, catalyzes the transfer of a dimethylallyl group onto the adenine at position 37 in tRNAs that read codons beginning with uridine, leading to the formation of N6-(dimethylallyl)adenosine (i(6)A). This chain is tRNA dimethylallyltransferase, found in Anoxybacillus flavithermus (strain DSM 21510 / WK1).